A 208-amino-acid chain; its full sequence is Troponin I, cardiac muscle (208 aa).

Disordered stretches follow at residues 1–37 (MAEE…KISA), 54–74 (DLER…GELC), and 168–208 (VRKD…GGQS). A2 bears the N-acetylalanine mark. The interval 28–73 (HAKRQSKISASRKLQLKTLLLQRAKRDLEREEQERAGEKQRHLGEL) is involved in binding TNC. 2 stretches are compositionally biased toward basic and acidic residues: residues 54 to 71 (DLER…RHLG) and 168 to 187 (VRKD…RKNV).

Belongs to the troponin I family. In terms of assembly, binds to actin and tropomyosin.

Functionally, troponin I is the inhibitory subunit of troponin, the thin filament regulatory complex which confers calcium-sensitivity to striated muscle actomyosin ATPase activity. The polypeptide is Troponin I, cardiac muscle (TNNI3) (Coturnix japonica (Japanese quail)).